A 114-amino-acid polypeptide reads, in one-letter code: Beta-microseminoprotein (114 aa).

A signal peptide spans 1–20; the sequence is MNVLLGGFVIFATFVTLCNA. 5 disulfide bridges follow: Cys22-Cys70, Cys38-Cys62, Cys57-Cys93, Cys60-Cys69, and Cys84-Cys107.

This sequence belongs to the beta-microseminoprotein family. In terms of assembly, homodimer; Interacts with PI16.

It is found in the secreted. This chain is Beta-microseminoprotein (MSMB), found in Macaca mulatta (Rhesus macaque).